Reading from the N-terminus, the 158-residue chain is NAD(P)H-quinone oxidoreductase subunit J, chloroplastic (158 aa).

The protein belongs to the complex I 30 kDa subunit family. As to quaternary structure, NDH is composed of at least 16 different subunits, 5 of which are encoded in the nucleus.

The protein resides in the plastid. It localises to the chloroplast thylakoid membrane. It catalyses the reaction a plastoquinone + NADH + (n+1) H(+)(in) = a plastoquinol + NAD(+) + n H(+)(out). The enzyme catalyses a plastoquinone + NADPH + (n+1) H(+)(in) = a plastoquinol + NADP(+) + n H(+)(out). In terms of biological role, NDH shuttles electrons from NAD(P)H:plastoquinone, via FMN and iron-sulfur (Fe-S) centers, to quinones in the photosynthetic chain and possibly in a chloroplast respiratory chain. The immediate electron acceptor for the enzyme in this species is believed to be plastoquinone. Couples the redox reaction to proton translocation, and thus conserves the redox energy in a proton gradient. This Morus indica (Mulberry) protein is NAD(P)H-quinone oxidoreductase subunit J, chloroplastic.